The primary structure comprises 311 residues: Protein N-terminal asparagine amidohydrolase (311 aa).

Monomer.

It localises to the cytoplasm. The enzyme catalyses N-terminal L-asparaginyl-[protein] + H2O + H(+) = N-terminal L-aspartyl-[protein] + NH4(+). Its function is as follows. N-terminal asparagine deamidase that mediates deamidation of N-terminal asparagine residues to aspartate. Required for the ubiquitin-dependent turnover of intracellular proteins that initiate with Met-Asn. These proteins are acetylated on the retained initiator methionine and can subsequently be modified by the removal of N-acetyl methionine by acylaminoacid hydrolase (AAH). Conversion of the resulting N-terminal asparagine to aspartate by NTAN1/PNAD renders the protein susceptible to arginylation, polyubiquitination and degradation as specified by the N-end rule. This enzyme does not act on substrates with internal or C-terminal asparagines and does not act on glutamine residues in any position. The chain is Protein N-terminal asparagine amidohydrolase (NTAN1) from Sus scrofa (Pig).